We begin with the raw amino-acid sequence, 186 residues long: Peptidyl-tRNA hydrolase (186 aa).

The active-site Proton acceptor is His-19. Residues Phe-64, Asn-66, and Asn-112 each coordinate tRNA.

This sequence belongs to the PTH family. As to quaternary structure, monomer.

It localises to the cytoplasm. It catalyses the reaction an N-acyl-L-alpha-aminoacyl-tRNA + H2O = an N-acyl-L-amino acid + a tRNA + H(+). Its function is as follows. Hydrolyzes ribosome-free peptidyl-tRNAs (with 1 or more amino acids incorporated), which drop off the ribosome during protein synthesis, or as a result of ribosome stalling. Functionally, catalyzes the release of premature peptidyl moieties from peptidyl-tRNA molecules trapped in stalled 50S ribosomal subunits, and thus maintains levels of free tRNAs and 50S ribosomes. This chain is Peptidyl-tRNA hydrolase, found in Pelagibacter ubique (strain HTCC1062).